A 162-amino-acid polypeptide reads, in one-letter code: Transcription antitermination protein NusB (162 aa).

It belongs to the NusB family.

Its function is as follows. Involved in transcription antitermination. Required for transcription of ribosomal RNA (rRNA) genes. Binds specifically to the boxA antiterminator sequence of the ribosomal RNA (rrn) operons. This chain is Transcription antitermination protein NusB, found in Xanthomonas euvesicatoria pv. vesicatoria (strain 85-10) (Xanthomonas campestris pv. vesicatoria).